We begin with the raw amino-acid sequence, 485 residues long: Protein nucleotidyltransferase YdiU (485 aa).

ATP contacts are provided by Gly-90, Gly-92, Arg-93, Lys-113, Asp-125, Gly-126, Arg-176, and Arg-183. Asp-252 functions as the Proton acceptor in the catalytic mechanism. Asn-253 and Asp-262 together coordinate Mg(2+). Asp-262 is an ATP binding site.

This sequence belongs to the SELO family. Mg(2+) is required as a cofactor. The cofactor is Mn(2+).

The catalysed reaction is L-seryl-[protein] + ATP = 3-O-(5'-adenylyl)-L-seryl-[protein] + diphosphate. The enzyme catalyses L-threonyl-[protein] + ATP = 3-O-(5'-adenylyl)-L-threonyl-[protein] + diphosphate. It catalyses the reaction L-tyrosyl-[protein] + ATP = O-(5'-adenylyl)-L-tyrosyl-[protein] + diphosphate. It carries out the reaction L-histidyl-[protein] + UTP = N(tele)-(5'-uridylyl)-L-histidyl-[protein] + diphosphate. The catalysed reaction is L-seryl-[protein] + UTP = O-(5'-uridylyl)-L-seryl-[protein] + diphosphate. The enzyme catalyses L-tyrosyl-[protein] + UTP = O-(5'-uridylyl)-L-tyrosyl-[protein] + diphosphate. In terms of biological role, nucleotidyltransferase involved in the post-translational modification of proteins. It can catalyze the addition of adenosine monophosphate (AMP) or uridine monophosphate (UMP) to a protein, resulting in modifications known as AMPylation and UMPylation. This Vibrio atlanticus (strain LGP32) (Vibrio splendidus (strain Mel32)) protein is Protein nucleotidyltransferase YdiU.